Here is a 414-residue protein sequence, read N- to C-terminus: Probable uracil permease (414 aa).

Residues 1 to 14 (MTNQIPPSLAENQS) lie on the Cytoplasmic side of the membrane. The chain crosses the membrane as a helical span at residues 15–38 (KLKQSFVGLQMLFVAFGALVLVPL). The Periplasmic portion of the chain corresponds to 39 to 42 (ITGL). Residues 43–62 (DSNTALLTAGVGTLLFQFCT) traverse the membrane as a helical segment. Over 63–65 (GKQ) the chain is Cytoplasmic. A discontinuously helical membrane pass occupies residues 66-82 (VPIFLASSFAFIAPIQY). Position 74 (Phe-74) interacts with uracil. Topologically, residues 83 to 91 (GVQTWGIAT) are periplasmic. A helical transmembrane segment spans residues 92-112 (TMGGLAFTGLVYFALSTLVKL). At 113 to 124 (RGAEALQRFFPP) the chain is on the cytoplasmic side. A helical membrane pass occupies residues 125–146 (VVVGPVIIIIGMGLAPIAVDMS). The Periplasmic portion of the chain corresponds to 147-155 (LGKNSAYAY). A helical membrane pass occupies residues 156–171 (NDAVLVSMVTLLTTLS). The Cytoplasmic segment spans residues 172 to 178 (VAVFAKG). Residues 179 to 199 (LMKLIPIMFGITAGYILCLFL) traverse the membrane as a helical segment. The Periplasmic portion of the chain corresponds to 200-224 (GLINFQPVIDAPWFSLPKLTTPEFN). A helical membrane pass occupies residues 225–248 (LEAILYMLPIAIAPAVEHVGGIMA). Glu-241 lines the uracil pocket. The Cytoplasmic segment spans residues 249–261 (ISSVTGKDFLKKP). A helical membrane pass occupies residues 262-281 (GLHRTLLGDGIATAAASLVG). The discontinuously helical transmembrane segment at 282 to 298 (GPPNTTYAEVTGAVMLT) threads the bilayer. Glu-290 lines the uracil pocket. Residues 299–301 (RNF) are Cytoplasmic-facing. The helical transmembrane segment at 302 to 319 (NPNIMTWAAVWAIAISFC) threads the bilayer. Topologically, residues 320–332 (GKVGAFLSTIPTI) are periplasmic. The chain crosses the membrane as a helical span at residues 333–354 (VMGGIMMLVFGSIAVVGMSTLI). Topologically, residues 355-365 (RGKVDVTEARN) are cytoplasmic. An intramembrane region (discontinuously helical) is located at residues 366–401 (LCIISVVMTFGIGNMFVDVGNVSLKGISLCAIVAII). Over 402-414 (LNLVLPKAKNEVE) the chain is Cytoplasmic.

Belongs to the nucleobase:cation symporter-2 (NCS2) (TC 2.A.40) family.

The protein localises to the cell inner membrane. It catalyses the reaction uracil(in) + H(+)(in) = uracil(out) + H(+)(out). Its function is as follows. Transport of uracil in the cell. The polypeptide is Probable uracil permease (uraA) (Haemophilus influenzae (strain ATCC 51907 / DSM 11121 / KW20 / Rd)).